A 138-amino-acid polypeptide reads, in one-letter code: uncharacterized protein (138 aa).

The MsrB domain maps to 9 to 133; sequence EDEWKKELGP…NSASLEFHNE (125 aa). Cysteine 49, cysteine 52, cysteine 97, and cysteine 100 together coordinate Zn(2+). The Nucleophile role is filled by cysteine 122.

This sequence belongs to the MsrB Met sulfoxide reductase family. Zn(2+) is required as a cofactor.

Its subcellular location is the cytoplasm. It localises to the nucleus. This is an uncharacterized protein from Schizosaccharomyces pombe (strain 972 / ATCC 24843) (Fission yeast).